Consider the following 127-residue polypeptide: Small ribosomal subunit protein eS8 (127 aa).

Residues 1–25 (MTIFQGKSGKKPTGGNLKQAKKKRR) are disordered.

This sequence belongs to the eukaryotic ribosomal protein eS8 family. As to quaternary structure, part of the 30S ribosomal subunit.

The sequence is that of Small ribosomal subunit protein eS8 from Thermoplasma volcanium (strain ATCC 51530 / DSM 4299 / JCM 9571 / NBRC 15438 / GSS1).